We begin with the raw amino-acid sequence, 175 residues long: Protein TWIN SISTER of FT (175 aa).

Belongs to the phosphatidylethanolamine-binding protein family.

The protein localises to the cytoplasm. Its function is as follows. May form complexes with phosphorylated ligands by interfering with kinases and their effectors. The protein is Protein TWIN SISTER of FT (TSF) of Arabidopsis thaliana (Mouse-ear cress).